Reading from the N-terminus, the 367-residue chain is Choline-phosphate cytidylyltransferase A (367 aa).

Methionine 1 is subject to N-acetylmethionine. The disordered stretch occupies residues 1–33; that stretch reads MDAQCSAKVNARKRRKEAPGPNGATEEDGVPSK. Position 8 is an N6-acetyllysine (lysine 8). CTP-binding residues include isoleucine 84, phenylalanine 85, histidine 92, and lysine 122. Positions 122 and 151 each coordinate phosphocholine. CTP contacts are provided by histidine 168, aspartate 169, tyrosine 173, glutamine 195, arginine 196, threonine 197, and isoleucine 200. Amphipathic stretches follow at residues 228–287 and 298–315; these read KELN…EFIG and ALKH…QAIS. The residue at position 233 (serine 233) is a Phosphoserine. The autoinhibitory (AI) stretch occupies residues 272 to 293; the sequence is IDLIQKWEEKSREFIGSFLEMF. Positions 313–367 are disordered; sequence AISPKQSPSSSPTRERSPSPSFRWPFSGKTSPPCSPANLSRHKAAAYDISEDEED. Phosphoserine occurs at positions 315, 319, 321, 322, and 323. Repeat 1 spans residues 319 to 324; that stretch reads SPSSSP. Residues 319-339 are compositionally biased toward low complexity; that stretch reads SPSSSPTRERSPSPSFRWPFS. A Phosphothreonine modification is found at threonine 325. Residues serine 329, serine 331, and serine 333 each carry the phosphoserine modification. Residues 329 to 333 form a 2; approximate repeat; sequence SPSPS. Threonine 342 bears the Phosphothreonine mark. Residues serine 343, serine 347, serine 352, and serine 362 each carry the phosphoserine modification. Repeat 3 spans residues 343–348; sequence SPPCSP.

It belongs to the cytidylyltransferase family. As to quaternary structure, homodimer. Post-translationally, the serine residues of the C-terminus are phosphorylated. The inactive soluble form is stabilized by phosphorylation, the active membrane bound form is promoted by anionic lipids or diacylglycerol, and is stabilized by dephosphorylation. In terms of processing, monoubiquitinated by the SCF(FBXL2) complex, leading to proteasomal degradation. As to expression, brain, placenta, liver, fetal and adult lung.

It localises to the cytoplasm. The protein localises to the cytosol. The protein resides in the membrane. Its subcellular location is the endoplasmic reticulum membrane. It is found in the nucleus. It catalyses the reaction phosphocholine + CTP + H(+) = CDP-choline + diphosphate. It participates in phospholipid metabolism; phosphatidylcholine biosynthesis; phosphatidylcholine from phosphocholine: step 1/2. Its activity is regulated as follows. Interconverts between an inactive cytosolic form and an active membrane-bound form. Activation involves disruption of an inhibitory interaction between helices at the base of the active site and the autoinhibitory (AI) region. Activated by anionic lipid vesicles and by oleic acid or diacylglycerol-containing phosphatidylcholine vesicles. Catalyzes the key rate-limiting step in the CDP-choline pathway for phosphatidylcholine biosynthesis. The chain is Choline-phosphate cytidylyltransferase A (PCYT1A) from Homo sapiens (Human).